The sequence spans 34 residues: Photosystem II reaction center protein M (34 aa).

Residues 5–25 traverse the membrane as a helical segment; that stretch reads ILGLTATALFIIIPTSFLLIL.

This sequence belongs to the PsbM family. PSII is composed of 1 copy each of membrane proteins PsbA, PsbB, PsbC, PsbD, PsbE, PsbF, PsbH, PsbI, PsbJ, PsbK, PsbL, PsbM, PsbT, PsbX, PsbY, PsbZ, Psb30/Ycf12, at least 3 peripheral proteins of the oxygen-evolving complex and a large number of cofactors. It forms dimeric complexes.

It is found in the plastid. The protein localises to the chloroplast thylakoid membrane. One of the components of the core complex of photosystem II (PSII). PSII is a light-driven water:plastoquinone oxidoreductase that uses light energy to abstract electrons from H(2)O, generating O(2) and a proton gradient subsequently used for ATP formation. It consists of a core antenna complex that captures photons, and an electron transfer chain that converts photonic excitation into a charge separation. This subunit is found at the monomer-monomer interface. This chain is Photosystem II reaction center protein M, found in Stigeoclonium helveticum (Green alga).